Here is a 79-residue protein sequence, read N- to C-terminus: Putative defensin-like protein 137 (79 aa).

Residues 1–24 (MKKYFQPSFVILIIFTVLVLGVVG) form the signal peptide. 4 disulfide bridges follow: Cys33–Cys78, Cys42–Cys62, Cys47–Cys72, and Cys51–Cys74.

Belongs to the DEFL family.

It is found in the secreted. The chain is Putative defensin-like protein 137 (LCR14) from Arabidopsis thaliana (Mouse-ear cress).